A 166-amino-acid polypeptide reads, in one-letter code: Crossover junction endodeoxyribonuclease RuvC (166 aa).

Catalysis depends on residues Asp11, Glu70, and Asp142. Asp11, Glu70, and Asp142 together coordinate Mg(2+).

It belongs to the RuvC family. In terms of assembly, homodimer which binds Holliday junction (HJ) DNA. The HJ becomes 2-fold symmetrical on binding to RuvC with unstacked arms; it has a different conformation from HJ DNA in complex with RuvA. In the full resolvosome a probable DNA-RuvA(4)-RuvB(12)-RuvC(2) complex forms which resolves the HJ. It depends on Mg(2+) as a cofactor.

Its subcellular location is the cytoplasm. The enzyme catalyses Endonucleolytic cleavage at a junction such as a reciprocal single-stranded crossover between two homologous DNA duplexes (Holliday junction).. Functionally, the RuvA-RuvB-RuvC complex processes Holliday junction (HJ) DNA during genetic recombination and DNA repair. Endonuclease that resolves HJ intermediates. Cleaves cruciform DNA by making single-stranded nicks across the HJ at symmetrical positions within the homologous arms, yielding a 5'-phosphate and a 3'-hydroxyl group; requires a central core of homology in the junction. The consensus cleavage sequence is 5'-(A/T)TT(C/G)-3'. Cleavage occurs on the 3'-side of the TT dinucleotide at the point of strand exchange. HJ branch migration catalyzed by RuvA-RuvB allows RuvC to scan DNA until it finds its consensus sequence, where it cleaves and resolves the cruciform DNA. The sequence is that of Crossover junction endodeoxyribonuclease RuvC from Nitratidesulfovibrio vulgaris (strain ATCC 29579 / DSM 644 / CCUG 34227 / NCIMB 8303 / VKM B-1760 / Hildenborough) (Desulfovibrio vulgaris).